A 981-amino-acid polypeptide reads, in one-letter code: Protein deadlock (981 aa).

The required for interaction with rhi/rhino stretch occupies residues 1 to 60 (MEKLDKIRMSQKLSCWQHILTTLGTSSKTEQEWNTFFKGFLESWRKPYCIQTSCDPSIPL). Disordered stretches follow at residues 72–195 (LQEN…ACAP), 274–307 (IMDK…DDQL), 327–352 (SRNE…NKKE), 375–446 (LRKS…PNNI), 554–586 (GLDD…ETLK), and 642–662 (LVHQ…TAAR). Composition is skewed to polar residues over residues 104–113 (PSKSHSTGST) and 150–160 (NHTTSIFSKAQ). Over residues 167–191 (KLSSTKKRPDTCAPTDDSRKNREPR) the composition is skewed to basic and acidic residues. The span at 337 to 352 (EKVKLKGERPAQNKKE) shows a compositional bias: basic and acidic residues. Positions 377–390 (KSVKKSAKQQKPRV) are enriched in basic residues. Residues 409–419 (TQDKQSTHEMI) show a composition bias toward basic and acidic residues. Positions 422-446 (QAKTISEASGQQTSQVQSSLSPNNI) are enriched in polar residues. A compositionally biased stretch (basic and acidic residues) spans 652 to 662 (RNQRDEATAAR).

In terms of assembly, component of the Rhino-Deadlock-Cutoff (RDC) complex, composed of rhi/rhino, del/deadlock and cuff/cutoff. Interacts (via N-terminus) with rhi/rhino (via C-terminus); this interaction is direct. Interacts (via C-terminus) with cuff/cutoff; this interaction is direct.

It localises to the nucleus. Its subcellular location is the cytoplasm. The protein localises to the cytoskeleton. The protein resides in the microtubule organizing center. It is found in the centrosome. It localises to the chromosome. Its function is as follows. Developmental protein involved in oogenesis. Required for germline maintenance, stability of mitotic spindles, localization of patterning determinants, oocyte growth and fusome biogenesis in males and females. Also required for dorso-ventral and antero-posterior patterning of oocyte and eggshell. May be involved in microtubule function during oogenesis. Part of a rhi-dependent transcription machinery that enables the generation of piRNA precursors from heterochromatin while maintaining the suppression of transposon-encoded promoters and enhancers. Component of the RDC complex (rhi, del and cuff) which binds to repressive H3K9me3 marks in the piRNA clusters. RDC promotes the bidirectional transcription of piRNA clusters at these sites by interacting with Moonshiner which forms a complex with the transcription initiation factors TfIIA-S and Trf2. This mechanism allows transcription to occur in piRNA clusters despite the lack of proper promoter elements and in the presence of the repressive H3K9me3 mark. As part of the RDC complex, involved in suppression of splicing. The chain is Protein deadlock (del) from Drosophila melanogaster (Fruit fly).